A 600-amino-acid chain; its full sequence is NADH-quinone oxidoreductase subunit C/D (600 aa).

An NADH dehydrogenase I subunit C region spans residues 1-190; it reads MVNNMTDLTA…DPFELTKAKQ (190 aa). Residues 214-600 are NADH dehydrogenase I subunit D; it reads DFMFLNLGPN…IDFVMSDVDR (387 aa).

In the N-terminal section; belongs to the complex I 30 kDa subunit family. It in the C-terminal section; belongs to the complex I 49 kDa subunit family. As to quaternary structure, NDH-1 is composed of 13 different subunits. Subunits NuoB, CD, E, F, and G constitute the peripheral sector of the complex.

The protein resides in the cell inner membrane. The enzyme catalyses a quinone + NADH + 5 H(+)(in) = a quinol + NAD(+) + 4 H(+)(out). Its function is as follows. NDH-1 shuttles electrons from NADH, via FMN and iron-sulfur (Fe-S) centers, to quinones in the respiratory chain. The immediate electron acceptor for the enzyme in this species is believed to be ubiquinone. Couples the redox reaction to proton translocation (for every two electrons transferred, four hydrogen ions are translocated across the cytoplasmic membrane), and thus conserves the redox energy in a proton gradient. This Salmonella paratyphi A (strain ATCC 9150 / SARB42) protein is NADH-quinone oxidoreductase subunit C/D.